The chain runs to 539 residues: Sodium/hydrogen exchanger 9B2 (539 aa).

At 1 to 94 (MEDSLFSVDK…ACPPQGCFSL (94 aa)) the chain is on the cytoplasmic side. The chain crosses the membrane as a helical span at residues 95–112 (AITNVTMVILIWAVVWSI). The Extracellular segment spans residues 113-121 (TGPECLPGG). A helical transmembrane segment spans residues 122–141 (NLFGILALLFSAALGGKLIS). Topologically, residues 142–152 (LIKIPSLPPLP) are cytoplasmic. A helical transmembrane segment spans residues 153–169 (PLLGMLLAGFLIRNIPV). Residues 170–179 (ITDQVQIHHK) lie on the Extracellular side of the membrane. The helical transmembrane segment at 180-197 (WSAALRNIALAIILVRAG) threads the bilayer. Residues 198–208 (LGLDPKALRKL) are Cytoplasmic-facing. Residues 209–235 (KAVCLRLSFGPCVVESCTAAVVSHFIM) traverse the membrane as a helical segment. Topologically, residues 236-241 (GFPLTW) are extracellular. A helical membrane pass occupies residues 242–250 (GFMLGFVLG). Residues 251 to 278 (AVSPAVVVPSMLILQKEGFGVDKGIPTL) are Cytoplasmic-facing. Residues Val-252, Gly-283, Asp-286, and Asp-287 each contribute to the Na(+) site. The chain crosses the membrane as a helical span at residues 279–298 (LMAAGSFDDVLAITGFNTCL). Residues 299–308 (GMAFSSGSTL) are Extracellular-facing. Residues 309-332 (NTIVRGVLEVVVGIAAGLLFGFFL) traverse the membrane as a helical segment. Topologically, residues 333–347 (HYFPSKDQENLKGKR) are cytoplasmic. The helical transmembrane segment at 348-365 (SYLILALSVFAVFGSLYF) threads the bilayer. The Extracellular portion of the chain corresponds to 366–369 (GFPG). Residues 370 to 381 (SGGLCTLVMAFL) form a helical membrane-spanning segment. Over 382–398 (AGIGWSTDKTVVEDIIA) the chain is Cytoplasmic. The chain crosses the membrane as a helical span at residues 399-419 (VSWDIFQPLLFGLIGAEISVA). Residues 420 to 425 (SLKPET) lie on the Extracellular side of the membrane. The helical transmembrane segment at 426–448 (VGLCTATLIIALIIRICISFLMV) threads the bilayer. The Cytoplasmic portion of the chain corresponds to 449 to 469 (CFSGFSLKEKIFISLAWMPKA). The helical transmembrane segment at 470–481 (TVQAAIGSVALD) threads the bilayer. The Extracellular segment spans residues 482–494 (TARTLENKQFEDY). The helical transmembrane segment at 495 to 517 (GMDVLTVAFLGILVTAPIGALVI) threads the bilayer. Residues 518–539 (GLTGPKMLEKSESRTVTEEGSV) are Cytoplasmic-facing.

The protein belongs to the monovalent cation:proton antiporter 1 (CPA1) transporter (TC 2.A.36) family. Homodimer; dimerization is essential for SLC9B2 activity. Lipids seem to play a role in the stabilization of the dimerization subdomain.

It is found in the cell membrane. Its subcellular location is the mitochondrion membrane. The protein localises to the endosome membrane. It localises to the recycling endosome membrane. The protein resides in the cytoplasmic vesicle. It is found in the secretory vesicle. Its subcellular location is the synaptic vesicle membrane. The protein localises to the basolateral cell membrane. It localises to the apical cell membrane. It catalyses the reaction Li(+)(out) + H(+)(in) = Li(+)(in) + H(+)(out). The catalysed reaction is Li(+)(in) + Na(+)(out) = Li(+)(out) + Na(+)(in). It carries out the reaction Na(+)(in) + H(+)(out) = Na(+)(out) + H(+)(in). Allosterically inhibited by the N-terminal domain. Inhibited by phloretin. In terms of biological role, electroneutral Na(+) Li(+)/H(+) antiporter that extrudes Na(+) or Li(+) in exchange for external protons across the membrane. Uses the proton gradient/membrane potential to extrude sodium. Contributes to the regulation of intracellular pH and sodium homeostasis. Also able to mediate Na(+)/Li(+) antiporter activity in kidney. The polypeptide is Sodium/hydrogen exchanger 9B2 (slc9b2) (Xenopus tropicalis (Western clawed frog)).